A 470-amino-acid chain; its full sequence is Aminodeoxychorismate synthase component 1 (470 aa).

This sequence belongs to the anthranilate synthase component I family. Monomer. Heterodimer consisting of two non-identical subunits: a glutamine amidotransferase subunit (PabA) and a aminodeoxychorismate synthase subunit (PabB). Requires Mg(2+) as cofactor.

The enzyme catalyses chorismate + L-glutamine = 4-amino-4-deoxychorismate + L-glutamate. The protein operates within cofactor biosynthesis; tetrahydrofolate biosynthesis; 4-aminobenzoate from chorismate: step 1/2. Its function is as follows. Part of a heterodimeric complex that catalyzes the two-step biosynthesis of 4-amino-4-deoxychorismate (ADC), a precursor of p-aminobenzoate (PABA) and tetrahydrofolate. In the first step, a glutamine amidotransferase (PabA) generates ammonia as a substrate that, along with chorismate, is used in the second step, catalyzed by aminodeoxychorismate synthase (PabB) to produce ADC. The polypeptide is Aminodeoxychorismate synthase component 1 (pabB) (Bacillus subtilis (strain 168)).